The primary structure comprises 154 residues: Major allergen Api g 1, isoallergen 1 (154 aa).

It belongs to the BetVI family.

The protein is Major allergen Api g 1, isoallergen 1 of Apium graveolens (Celery).